We begin with the raw amino-acid sequence, 424 residues long: Serine--tRNA ligase (424 aa).

Residue 231 to 233 participates in L-serine binding; that stretch reads TAE. Position 262 to 264 (262 to 264) interacts with ATP; sequence RSE. Glutamate 285 contacts L-serine. ATP is bound at residue 349-352; it reads EISS. An L-serine-binding site is contributed by serine 385.

This sequence belongs to the class-II aminoacyl-tRNA synthetase family. Type-1 seryl-tRNA synthetase subfamily. In terms of assembly, homodimer. The tRNA molecule binds across the dimer.

The protein localises to the cytoplasm. The enzyme catalyses tRNA(Ser) + L-serine + ATP = L-seryl-tRNA(Ser) + AMP + diphosphate + H(+). The catalysed reaction is tRNA(Sec) + L-serine + ATP = L-seryl-tRNA(Sec) + AMP + diphosphate + H(+). The protein operates within aminoacyl-tRNA biosynthesis; selenocysteinyl-tRNA(Sec) biosynthesis; L-seryl-tRNA(Sec) from L-serine and tRNA(Sec): step 1/1. Functionally, catalyzes the attachment of serine to tRNA(Ser). Is also able to aminoacylate tRNA(Sec) with serine, to form the misacylated tRNA L-seryl-tRNA(Sec), which will be further converted into selenocysteinyl-tRNA(Sec). This chain is Serine--tRNA ligase, found in Bacillus cereus (strain B4264).